Here is a 136-residue protein sequence, read N- to C-terminus: MILNWKLLGILVLCLHTRGISGSEDHPSHPPAEDREEAGSPTLPQGPPVPGDPWPGAPPLFEDPPPPHPSPPWRDLPETGVWPPEPPRTDPPQPPRPDDPWPAGPQPPENPWPPAPEVDHRPQEEPDLDPPREEYR.

The first 22 residues, 1–22 (MILNWKLLGILVLCLHTRGISG), serve as a signal peptide directing secretion. Residues 20–136 (ISGSEDHPSH…DLDPPREEYR (117 aa)) are disordered. A compositionally biased stretch (basic and acidic residues) spans 23-33 (SEDHPSHPPAE). 2 stretches are compositionally biased toward pro residues: residues 44–74 (PQGP…PPWR) and 83–116 (PPEP…PPAP). Basic and acidic residues predominate over residues 117–136 (EVDHRPQEEPDLDPPREEYR).

It localises to the secreted. The chain is Psoriasis susceptibility 1 candidate gene 2 protein homolog (PSORS1C2) from Pan troglodytes (Chimpanzee).